The primary structure comprises 184 residues: Protein CPn_0803/CP_1068/CPj0803/CpB0832 (184 aa).

The protein belongs to the chlamydial CPn_0803/CT_584/TC_0873 family.

This is Protein CPn_0803/CP_1068/CPj0803/CpB0832 from Chlamydia pneumoniae (Chlamydophila pneumoniae).